Here is a 174-residue protein sequence, read N- to C-terminus: Large ribosomal subunit protein uL10 (174 aa).

It belongs to the universal ribosomal protein uL10 family. In terms of assembly, part of the ribosomal stalk of the 50S ribosomal subunit. The N-terminus interacts with L11 and the large rRNA to form the base of the stalk. The C-terminus forms an elongated spine to which L12 dimers bind in a sequential fashion forming a multimeric L10(L12)X complex.

Forms part of the ribosomal stalk, playing a central role in the interaction of the ribosome with GTP-bound translation factors. In Anaeromyxobacter sp. (strain K), this protein is Large ribosomal subunit protein uL10.